Consider the following 333-residue polypeptide: Trimethylamine N-oxide-binding protein (333 aa).

The first 42 residues, 1–42 (MRLFREIAANDPGPTGRMKNMKTFTTALATGVLALCPLAALA), serve as a signal peptide directing secretion. Positions 55, 102, 131, 177, and 222 each coordinate trimethylamine N-oxide. Ca(2+) contacts are provided by P249, V251, N254, A257, and D260.

As to quaternary structure, the complex is probably composed of two ATP-binding proteins (TmoW), two transmembrane proteins (TmoV) and a solute-binding protein (TmoX). Monomer in solution, but forms homodimers in crystals.

The protein localises to the periplasm. Its activity is regulated as follows. Binds a Ca(2+) ion, which has little effect on either the binding affinity or the secondary structure, but plays an important role in maintaining the stability of TmoX. It may modulate the protein stability in response to biological needs and environmental changes. Thermostability is dramatically decreased when Ca(2+) is removed by EDTA. Its function is as follows. Part of the ABC transporter complex TmoXWV involved in trimethylamine N-oxide (TMAO) import. Is specific for TMAO and essential for TMAO metabolism. Binds TMAO with high affinity. In vitro, also presents a high binding affinity for choline, however this transporter seems specific for TMAO and the choline-binding affinity presented by recombinant TmoX may not make physiological sense. This is Trimethylamine N-oxide-binding protein from Ruegeria pomeroyi (strain ATCC 700808 / DSM 15171 / DSS-3) (Silicibacter pomeroyi).